A 235-amino-acid chain; its full sequence is Probable ribonuclease P protein subunit 3 (235 aa).

The protein belongs to the eukaryotic/archaeal RNase P protein component 3 family.

The protein resides in the nucleus. It catalyses the reaction Endonucleolytic cleavage of RNA, removing 5'-extranucleotides from tRNA precursor.. Functionally, part of ribonuclease P, a protein complex that generates mature tRNA molecules by cleaving their 5'-ends. This chain is Probable ribonuclease P protein subunit 3, found in Schizosaccharomyces pombe (strain 972 / ATCC 24843) (Fission yeast).